Consider the following 276-residue polypeptide: Orotidine 5'-phosphate decarboxylase (276 aa).

The active-site Proton donor is the Lys-93.

This sequence belongs to the OMP decarboxylase family. Type 2 subfamily.

The enzyme catalyses orotidine 5'-phosphate + H(+) = UMP + CO2. Its pathway is pyrimidine metabolism; UMP biosynthesis via de novo pathway; UMP from orotate: step 2/2. This is Orotidine 5'-phosphate decarboxylase from Halorubrum lacusprofundi (strain ATCC 49239 / DSM 5036 / JCM 8891 / ACAM 34).